The primary structure comprises 476 residues: Ribulose bisphosphate carboxylase large chain (476 aa).

Residues 1 to 2 (MS) constitute a propeptide that is removed on maturation. An N-acetylproline modification is found at proline 3. Residue lysine 14 is modified to N6,N6,N6-trimethyllysine. Substrate contacts are provided by asparagine 123 and threonine 173. Lysine 175 (proton acceptor) is an active-site residue. A substrate-binding site is contributed by lysine 177. Residues lysine 201, aspartate 203, and glutamate 204 each coordinate Mg(2+). Lysine 201 is modified (N6-carboxylysine). Catalysis depends on histidine 294, which acts as the Proton acceptor. Residues arginine 295, histidine 327, and serine 379 each contribute to the substrate site.

Belongs to the RuBisCO large chain family. Type I subfamily. Heterohexadecamer of 8 large chains and 8 small chains; disulfide-linked. The disulfide link is formed within the large subunit homodimers. Mg(2+) serves as cofactor. In terms of processing, the disulfide bond which can form in the large chain dimeric partners within the hexadecamer appears to be associated with oxidative stress and protein turnover.

Its subcellular location is the plastid. It is found in the chloroplast. It catalyses the reaction 2 (2R)-3-phosphoglycerate + 2 H(+) = D-ribulose 1,5-bisphosphate + CO2 + H2O. It carries out the reaction D-ribulose 1,5-bisphosphate + O2 = 2-phosphoglycolate + (2R)-3-phosphoglycerate + 2 H(+). Functionally, ruBisCO catalyzes two reactions: the carboxylation of D-ribulose 1,5-bisphosphate, the primary event in carbon dioxide fixation, as well as the oxidative fragmentation of the pentose substrate in the photorespiration process. Both reactions occur simultaneously and in competition at the same active site. This chain is Ribulose bisphosphate carboxylase large chain, found in Zea mays (Maize).